A 170-amino-acid polypeptide reads, in one-letter code: Protein ripply3 (170 aa).

The WRPW motif signature appears at 40–43; sequence WRPW. Residues 79–114 are ripply homology domain; sequence HPVRLYMPKSKTSEYLQHMGKKVLANFPVQATIHFY. Residues 143 to 152 are compositionally biased toward polar residues; it reads VNSSRGSGDN. The interval 143–170 is disordered; it reads VNSSRGSGDNYSVPGGPKRNISSHTGSA.

This sequence belongs to the ripply family. In terms of assembly, interacts with tbx1 and tle4/grg4.

It is found in the nucleus. Functionally, acts as a transcriptional corepressor. Negative regulator of the transcriptional activity of tbx1 that plays a key role in pharyngeal development. Plays a role in the formation of the anteroposterior (AP) axis during embryonic development; required to establish the posterolateral border of the pre-placodal ectoderm (PPE) acting downstream of the retinoic acid receptor (RAR) signaling. This chain is Protein ripply3, found in Xenopus tropicalis (Western clawed frog).